The chain runs to 68 residues: uncharacterized protein (68 aa).

This is an uncharacterized protein from Dryophytes versicolor (chameleon treefrog).